The following is a 372-amino-acid chain: Cytochrome b (372 aa).

The next 4 helical transmembrane spans lie at 25-45 (FGSM…FLAI), 69-90 (WIMQ…YIHI), 105-125 (WLSG…GYVL), and 170-190 (FFAL…IHII). 2 residues coordinate heme b: His-75 and His-89. Heme b is bound by residues His-174 and His-188. Residue His-193 participates in a ubiquinone binding. The next 4 helical transmembrane spans lie at 218–238 (YKDM…LSFS), 280–300 (LGGT…PFTH), 312–332 (LSQA…WTAS), and 339–358 (FVTI…ITIP).

Belongs to the cytochrome b family. In terms of assembly, the cytochrome bc1 complex contains 3 respiratory subunits (MT-CYB, CYC1 and UQCRFS1), 2 core proteins (UQCRC1 and UQCRC2) and probably 6 low-molecular weight proteins. Heme b is required as a cofactor.

The protein resides in the mitochondrion inner membrane. Its function is as follows. Component of the ubiquinol-cytochrome c reductase complex (complex III or cytochrome b-c1 complex) that is part of the mitochondrial respiratory chain. The b-c1 complex mediates electron transfer from ubiquinol to cytochrome c. Contributes to the generation of a proton gradient across the mitochondrial membrane that is then used for ATP synthesis. The sequence is that of Cytochrome b (MT-CYB) from Naja multifasciata (Burrowing cobra).